The following is a 179-amino-acid chain: Nuclear transcription factor Y subunit B (179 aa).

A disordered region spans residues 1 to 32 (MAEAPASPGGGGGSHESGSPRGGGGGGSVREQ). Residues 8 to 28 (PGGGGGSHESGSPRGGGGGGS) show a composition bias toward gly residues. The DNA-binding element occupies 36–42 (LPIANIS). Residues 63-74 (VQECVSEFISFI) are subunit association domain (SAD). Positions 147–179 (SSSAAEGMGQQGAYNQGMGYMQPQYHNGDISNV) are disordered.

The protein belongs to the NFYB/HAP3 subunit family. As to quaternary structure, heterotrimeric transcription factor composed of three components, NF-YA, NF-YB and NF-YC. NF-YB and NF-YC must interact and dimerize for NF-YA association and DNA binding.

It is found in the nucleus. Component of the NF-Y/HAP transcription factor complex. The NF-Y complex stimulates the transcription of various genes by recognizing and binding to a CCAAT motif in promoters. In Zea mays (Maize), this protein is Nuclear transcription factor Y subunit B (NFY2).